The sequence spans 366 residues: Peptide chain release factor 2 (366 aa).

Glutamine 251 carries the N5-methylglutamine modification.

Belongs to the prokaryotic/mitochondrial release factor family. In terms of processing, methylated by PrmC. Methylation increases the termination efficiency of RF2.

The protein resides in the cytoplasm. Peptide chain release factor 2 directs the termination of translation in response to the peptide chain termination codons UGA and UAA. The chain is Peptide chain release factor 2 (prfB) from Listeria innocua serovar 6a (strain ATCC BAA-680 / CLIP 11262).